The following is a 694-amino-acid chain: Methionine--tRNA ligase (694 aa).

The 'HIGH' region motif lies at 12 to 22; that stretch reads PYANGPLHLGH. C143, C146, C156, and C159 together coordinate Zn(2+). Residues 330 to 334 carry the 'KMSKS' region motif; sequence KMSKS. K333 contributes to the ATP binding site. A compositionally biased stretch (low complexity) spans 550–575; the sequence is LAAPAAPATTSKAAPAKPDTKPAAAA. A disordered region spans residues 550 to 580; sequence LAAPAAPATTSKAAPAKPDTKPAAAANPQSP. In terms of domain architecture, tRNA-binding spans 591–694; the sequence is DFAKLDLRIG…SGAQPGMPVR (104 aa).

The protein belongs to the class-I aminoacyl-tRNA synthetase family. MetG type 1 subfamily. In terms of assembly, homodimer. Zn(2+) is required as a cofactor.

The protein localises to the cytoplasm. The enzyme catalyses tRNA(Met) + L-methionine + ATP = L-methionyl-tRNA(Met) + AMP + diphosphate. Functionally, is required not only for elongation of protein synthesis but also for the initiation of all mRNA translation through initiator tRNA(fMet) aminoacylation. This Xanthomonas oryzae pv. oryzae (strain MAFF 311018) protein is Methionine--tRNA ligase.